We begin with the raw amino-acid sequence, 69 residues long: Small, acid-soluble spore protein I (69 aa).

This sequence belongs to the SspI family.

The protein resides in the spore core. This Shouchella clausii (strain KSM-K16) (Alkalihalobacillus clausii) protein is Small, acid-soluble spore protein I.